The sequence spans 436 residues: Probable transporter MCH1 (436 aa).

7 consecutive transmembrane segments (helical) span residues 27–47, 66–86, 93–113, 119–139, 155–175, 188–208, and 249–269; these read VVAFLISLLSCLVAGSILLFT, MISSLSALGMYFCLPVLGYLA, LLSLFSIWFFCPSYFVNSYLV, SVIGFCVCFCFIGLATSSLYF, LAISLPITCYGLSALLGAQIL, LEVVFSFFAWLYLVVGIASFV, and FVSFVKDPSAWILLVSLILNI. N-linked (GlcNAc...) asparagine glycosylation occurs at Asn278. 5 helical membrane passes run 295-312, 325-345, 347-367, 373-393, and 410-430; these read VSIMAASSTGARLLLGVL, LLVVVIVVGVAGQMSETSAIL, GVSYGGMFTIYPTIVASIWGI, TWGSFMVAPALGSVIFSMFYG, and TAGAMIVSCIFVLLAWKIWYA.

This sequence belongs to the major facilitator superfamily.

Its subcellular location is the vacuole membrane. Its function is as follows. Probable transporter. This Candida albicans (strain SC5314 / ATCC MYA-2876) (Yeast) protein is Probable transporter MCH1 (MCH1).